The chain runs to 116 residues: Nitrogenase-stabilizing/protective protein NifW (116 aa).

Belongs to the NifW family. As to quaternary structure, homotrimer; associates with NifD.

Functionally, may protect the nitrogenase Fe-Mo protein from oxidative damage. The polypeptide is Nitrogenase-stabilizing/protective protein NifW (Rhodopseudomonas palustris (strain TIE-1)).